Here is a 655-residue protein sequence, read N- to C-terminus: Sphingomyelin phosphodiesterase 3 (655 aa).

Over 1-10 (MVLYTTPFPN) the chain is Cytoplasmic. Positions 11–31 (SCLSALHAVSWALIFPCYWLV) form an intramembrane region, helical. Over 32 to 64 (DRLVASFIPTTYEKRQRADDPCYLQLFCTVLFT) the chain is Cytoplasmic. S-palmitoyl cysteine attachment occurs at residues cysteine 53 and cysteine 59. The helical intramembrane region spans 65 to 85 (PVYLALLVAALPFAFLGFIFW). Residues 86–655 (SPLQSARRPY…LMVSAGEEEA (570 aa)) are Cytoplasmic-facing. At serine 178 the chain carries Phosphoserine. 2 disordered regions span residues 209–237 (VEYK…DGSL) and 250–320 (GGRA…SNSK). Basic and acidic residues predominate over residues 211-221 (YKGDGGRHPSD). Serine 289 bears the Phosphoserine mark. Glutamate 362 provides a ligand contact to Mg(2+). Residues cysteine 395 and cysteine 396 are each lipidated (S-palmitoyl cysteine). Histidine 639 acts as the Proton acceptor in catalysis.

It belongs to the neutral sphingomyelinase family. Mg(2+) is required as a cofactor. In terms of processing, palmitoylated, palmitoylation-deficient proteins are targeted for lysosomal degradation. In brain sections, it is restricted to neurons and especially prominent in large cells, including Purkinje cells, pyramidal cells, neurons of the dentate gyrus granular layer, and neurons in the pontine nuclei. Also present in the hypothalamic nuclei, neurons in the piriform cortex, and nuclei of the brainstem (at protein level). Mainly expressed in brain and jejunum. Weakly or not expressed in heart, spleen, lung, liver, kidney and testis.

Its subcellular location is the golgi apparatus membrane. It is found in the cell membrane. It carries out the reaction a sphingomyelin + H2O = phosphocholine + an N-acylsphing-4-enine + H(+). The enzyme catalyses N-(15Z-tetracosenoyl)sphing-4-enine-1-phosphocholine + H2O = N-(15Z-tetracosenoyl)-sphing-4-enine + phosphocholine + H(+). It catalyses the reaction N-(tetracosanoyl)-sphing-4-enine-1-phosphocholine + H2O = N-tetracosanoyl-sphing-4-enine + phosphocholine + H(+). The catalysed reaction is an N-(acyl)-sphingosylphosphocholine + H2O = an N-acyl-sphingoid base + phosphocholine + H(+). It carries out the reaction 1-hexadecanoyl-sn-glycero-3-phosphocholine + H2O = 1-hexadecanoyl-sn-glycerol + phosphocholine + H(+). The enzyme catalyses 1-O-octadecyl-sn-glycero-3-phosphocholine + H2O = 1-O-octadecyl-sn-glycerol + phosphocholine + H(+). It catalyses the reaction a sphingosylphosphocholine + H2O = a sphingoid base + phosphocholine + H(+). The catalysed reaction is N-(hexadecanoyl)-sphing-4-enine-1-phosphocholine + H2O = N-hexadecanoylsphing-4-enine + phosphocholine + H(+). It functions in the pathway lipid metabolism; sphingolipid metabolism. Inhibited by nSMase inhibitor GW4869. Binding of anionic phospholipids (APLs) such as phosphatidylserine (PS) and phosphatidic acid (PA) increases enzymatic activity. Functionally, catalyzes the hydrolysis of sphingomyelin to form ceramide and phosphocholine. Ceramide mediates numerous cellular functions, such as apoptosis and growth arrest, and is capable of regulating these 2 cellular events independently. Also hydrolyzes sphingosylphosphocholine. Binds to anionic phospholipids (APLs) such as phosphatidylserine (PS) and phosphatidic acid (PA) that modulate enzymatic activity and subcellular location. Regulates the cell cycle by acting as a growth suppressor in confluent cells. Acts as a regulator of postnatal development and participates in bone and dentin mineralization. May be involved in IL-1-beta-induced JNK activation in hepatocytes. May act as a mediator in transcriptional regulation of NOS2/iNOS via the NF-kappa-B activation under inflammatory conditions. The sequence is that of Sphingomyelin phosphodiesterase 3 from Rattus norvegicus (Rat).